Here is an 834-residue protein sequence, read N- to C-terminus: Probable phosphoenolpyruvate synthase (834 aa).

His-447 (tele-phosphohistidine intermediate) is an active-site residue. 7 residues coordinate substrate: Arg-550, Arg-598, Glu-699, Gly-720, Ser-721, Asn-722, and Asp-723. Glu-699 is a binding site for Mg(2+). Asp-723 serves as a coordination point for Mg(2+). Cys-772 functions as the Proton donor in the catalytic mechanism.

This sequence belongs to the PEP-utilizing enzyme family. In terms of assembly, homooligomer. Forms a large complex of about 2000 kDa. Mg(2+) serves as cofactor. Post-translationally, the N-terminus is blocked.

It catalyses the reaction pyruvate + ATP + H2O = phosphoenolpyruvate + AMP + phosphate + 2 H(+). It functions in the pathway carbohydrate biosynthesis; gluconeogenesis. Catalyzes the phosphorylation of pyruvate to phosphoenolpyruvate. The protein is Probable phosphoenolpyruvate synthase (ppsA) of Staphylothermus marinus (strain ATCC 43588 / DSM 3639 / JCM 9404 / F1).